The chain runs to 126 residues: Large ribosomal subunit protein uL24 (126 aa).

Positions 1–23 (MKFSRDVTSSRRKQRKAHFGAPS) are disordered.

It belongs to the universal ribosomal protein uL24 family. In terms of assembly, component of the large ribosomal subunit (LSU). Mature yeast ribosomes consist of a small (40S) and a large (60S) subunit. The 40S small subunit contains 1 molecule of ribosomal RNA (18S rRNA) and at least 33 different proteins. The large 60S subunit contains 3 rRNA molecules (25S, 5.8S and 5S rRNA) and at least 46 different proteins.

The protein localises to the cytoplasm. It is found in the nucleus. The protein resides in the nucleolus. Its function is as follows. Component of the ribosome, a large ribonucleoprotein complex responsible for the synthesis of proteins in the cell. The small ribosomal subunit (SSU) binds messenger RNAs (mRNAs) and translates the encoded message by selecting cognate aminoacyl-transfer RNA (tRNA) molecules. The large subunit (LSU) contains the ribosomal catalytic site termed the peptidyl transferase center (PTC), which catalyzes the formation of peptide bonds, thereby polymerizing the amino acids delivered by tRNAs into a polypeptide chain. The nascent polypeptides leave the ribosome through a tunnel in the LSU and interact with protein factors that function in enzymatic processing, targeting, and the membrane insertion of nascent chains at the exit of the ribosomal tunnel. This is Large ribosomal subunit protein uL24 (rpl26) from Schizosaccharomyces pombe (strain 972 / ATCC 24843) (Fission yeast).